A 263-amino-acid chain; its full sequence is Endonuclease 8 (263 aa).

The Schiff-base intermediate with DNA role is filled by P2. The active-site Proton donor is E3. The Proton donor; for beta-elimination activity role is filled by K53. DNA contacts are provided by Q70, R125, and N169. The segment at 229-263 (KLFHRDGEACERCGGIIEKTTLSSRPFYWCPHCQK) adopts an FPG-type zinc-finger fold. The active-site Proton donor; for delta-elimination activity is the R253.

This sequence belongs to the FPG family. It depends on Zn(2+) as a cofactor.

It catalyses the reaction 2'-deoxyribonucleotide-(2'-deoxyribose 5'-phosphate)-2'-deoxyribonucleotide-DNA = a 3'-end 2'-deoxyribonucleotide-(2,3-dehydro-2,3-deoxyribose 5'-phosphate)-DNA + a 5'-end 5'-phospho-2'-deoxyribonucleoside-DNA + H(+). Functionally, involved in base excision repair of DNA damaged by oxidation or by mutagenic agents. Acts as a DNA glycosylase that recognizes and removes damaged bases. Has a preference for oxidized pyrimidines, such as thymine glycol, 5,6-dihydrouracil and 5,6-dihydrothymine. Has AP (apurinic/apyrimidinic) lyase activity and introduces nicks in the DNA strand. Cleaves the DNA backbone by beta-delta elimination to generate a single-strand break at the site of the removed base with both 3'- and 5'-phosphates. The protein is Endonuclease 8 of Salmonella typhimurium (strain SL1344).